The sequence spans 320 residues: Cytochrome f (320 aa).

An N-terminal signal peptide occupies residues 1–35 (MQNRNTFLGVKEQITRSIFVSIMIYVITRASISNA). 4 residues coordinate heme: tyrosine 36, cysteine 56, cysteine 59, and histidine 60. A helical membrane pass occupies residues 286–306 (IQGLLFFLASVILAQIFLVLK).

Belongs to the cytochrome f family. In terms of assembly, the 4 large subunits of the cytochrome b6-f complex are cytochrome b6, subunit IV (17 kDa polypeptide, petD), cytochrome f and the Rieske protein, while the 4 small subunits are PetG, PetL, PetM and PetN. The complex functions as a dimer. Heme is required as a cofactor.

It localises to the plastid. The protein localises to the chloroplast thylakoid membrane. Component of the cytochrome b6-f complex, which mediates electron transfer between photosystem II (PSII) and photosystem I (PSI), cyclic electron flow around PSI, and state transitions. The chain is Cytochrome f from Dioscorea elephantipes (Elephant's foot yam).